A 270-amino-acid chain; its full sequence is Protein US2 homolog (270 aa).

This sequence belongs to the herpesviridae US2 family.

This is Protein US2 homolog (MDV091) from Gallid herpesvirus 2 (strain Chicken/Md5/ATCC VR-987) (GaHV-2).